The sequence spans 583 residues: uncharacterized protein (583 aa).

This is an uncharacterized protein from Sinorhizobium fredii (strain NBRC 101917 / NGR234).